The following is a 344-amino-acid chain: Ketol-acid reductoisomerase (NADP(+)) (344 aa).

The KARI N-terminal Rossmann domain maps to 2 to 181; that stretch reads EKIYYDADIS…GAGRAGILTT (180 aa). Residues 25 to 28, Arg-48, Ser-52, and 82 to 85 each bind NADP(+); these read YGSQ and DERQ. His-107 is an active-site residue. Gly-133 lines the NADP(+) pocket. The region spanning 182-327 is the KARI C-terminal knotted domain; that stretch reads TFREETETDL…RKLRSMMPFI (146 aa). 4 residues coordinate Mg(2+): Asp-190, Glu-194, Glu-226, and Glu-230. A substrate-binding site is contributed by Ser-251.

It belongs to the ketol-acid reductoisomerase family. Mg(2+) serves as cofactor.

It carries out the reaction (2R)-2,3-dihydroxy-3-methylbutanoate + NADP(+) = (2S)-2-acetolactate + NADPH + H(+). The enzyme catalyses (2R,3R)-2,3-dihydroxy-3-methylpentanoate + NADP(+) = (S)-2-ethyl-2-hydroxy-3-oxobutanoate + NADPH + H(+). The protein operates within amino-acid biosynthesis; L-isoleucine biosynthesis; L-isoleucine from 2-oxobutanoate: step 2/4. It participates in amino-acid biosynthesis; L-valine biosynthesis; L-valine from pyruvate: step 2/4. In terms of biological role, involved in the biosynthesis of branched-chain amino acids (BCAA). Catalyzes an alkyl-migration followed by a ketol-acid reduction of (S)-2-acetolactate (S2AL) to yield (R)-2,3-dihydroxy-isovalerate. In the isomerase reaction, S2AL is rearranged via a Mg-dependent methyl migration to produce 3-hydroxy-3-methyl-2-ketobutyrate (HMKB). In the reductase reaction, this 2-ketoacid undergoes a metal-dependent reduction by NADPH to yield (R)-2,3-dihydroxy-isovalerate. This chain is Ketol-acid reductoisomerase (NADP(+)), found in Alicyclobacillus acidocaldarius subsp. acidocaldarius (strain ATCC 27009 / DSM 446 / BCRC 14685 / JCM 5260 / KCTC 1825 / NBRC 15652 / NCIMB 11725 / NRRL B-14509 / 104-IA) (Bacillus acidocaldarius).